A 55-amino-acid chain; its full sequence is Large ribosomal subunit protein bL33 (55 aa).

The protein belongs to the bacterial ribosomal protein bL33 family.

This chain is Large ribosomal subunit protein bL33, found in Blochmanniella pennsylvanica (strain BPEN).